A 284-amino-acid chain; its full sequence is Tropomyosin (284 aa).

M1 is modified (N-acetylmethionine). Residues 1-42 form a disordered region; the sequence is MDAIKKKMQAMKLEKDNAMDRADTLEQQNKEANNRAEKSEEE. The stretch at 1 to 284 forms a coiled coil; that stretch reads MDAIKKKMQA…DQTFSELSGY (284 aa). Basic and acidic residues predominate over residues 12–38; that stretch reads KLEKDNAMDRADTLEQQNKEANNRAEK.

The protein belongs to the tropomyosin family. As to quaternary structure, homodimer.

Functionally, tropomyosin, in association with the troponin complex, plays a central role in the calcium dependent regulation of muscle contraction. The sequence is that of Tropomyosin from Pandalus borealis (Northern red shrimp).